We begin with the raw amino-acid sequence, 191 residues long: Chromobox protein homolog 5 (191 aa).

The disordered stretch occupies residues 1–21; sequence MGKKTKRTADSSSSEDEEEYV. S11, S12, S13, and S14 each carry phosphoserine. Residues 20-78 enclose the Chromo 1 domain; it reads YVVEKVLDRRMVKGQVEYLLKWKGFSEEHNTWEPEKNLDCPELISEFMKKYKKMKEGEN. K32 is covalently cross-linked (Glycyl lysine isopeptide (Lys-Gly) (interchain with G-Cter in SUMO2)). K40 carries the N6-acetyllysine modification. The disordered stretch occupies residues 70–117; that stretch reads YKKMKEGENNKPREKSEGNKRKSSFSNSADDIKSKKKREQSNDIARGF. Basic and acidic residues predominate over residues 73-89; that stretch reads MKEGENNKPREKSEGNK. K91 is covalently cross-linked (Glycyl lysine isopeptide (Lys-Gly) (interchain with G-Cter in SUMO2)). A phosphoserine mark is found at S92, S93, S95, and S97. Glycyl lysine isopeptide (Lys-Gly) (interchain with G-Cter in SUMO2) cross-links involve residues K102, K106, K154, and K184. In terms of domain architecture, Chromo 2; shadow subtype spans 121 to 179; it reads LEPEKIIGATDSCGDLMFLMKWKDTDEADLVLAKEANVKCPQIVIAFYEERLTWHAYPE.

Homodimer. Interacts with histone H3 methylated at 'Lys-9'. Interacts (via Chromo 2; shadow subtype domain) with the MIS12 complex subunit NSL1; the interaction is direct, involves dimeric CBX5, and occurs during interphase. Interacts with POGZ; POGZ and PXVXL motif-containing proteins such as INCENP and TRIM28 compete for interaction with CBX5. Interacts with LRIF1 (via PxVxL motif). Interacts with INCENP. Interacts with TRIM24. Interacts (via the chromoshadow domain) with ATRX; the interaction is direct. Interacts (via the chromoshadow domain) with CHAF1A; the interaction is direct. Interacts (via the chromoshadow domain) with LBR; the interaction is direct. Interacts (via the chromoshadow domain) with NIPBL; the interaction is direct. Interacts (via the chromoshadow domain) with SP100; the interaction is direct. Interacts (via the chromoshadow domain) with STAM2; the interaction is direct. Interacts (via the chromoshadow domain) with TRIM28; the interaction is direct. Interacts (via the chromoshadow domain) with CBX3; the interaction is direct. Interacts with PRR14 (via N-terminus). Interacts with RRP1B. Interacts with HNRNPU (via C-terminus); this interaction is, at least in part, RNA-dependent. Interacts with ZNF263; recruited to the SIX3 promoter along with other proteins involved in chromatin modification and transcriptional corepression where it contributes to transcriptional repression. Interacts with AURKB during mitosis. Interacts with CHAMP1. Interacts with BAHD1. Interacts with HP1BP3. Interacts with CHD3. Interacts with CHD4. Interacts with SMYD5. Interacts with KMT5B. Interacts with KMT5C. In terms of processing, phosphorylation of HP1 and LBR may be responsible for some of the alterations in chromatin organization and nuclear structure which occur at various times during the cell cycle. Phosphorylated during interphase and possibly hyper-phosphorylated during mitosis. Ubiquitinated.

The protein resides in the nucleus. It is found in the chromosome. It localises to the centromere. Functionally, component of heterochromatin that recognizes and binds histone H3 tails methylated at 'Lys-9' (H3K9me), leading to epigenetic repression. In contrast, it is excluded from chromatin when 'Tyr-41' of histone H3 is phosphorylated (H3Y41ph). May contribute to the association of heterochromatin with the inner nuclear membrane by interactions with the lamin-B receptor (LBR). Involved in the formation of kinetochore through interaction with the MIS12 complex subunit NSL1. Required for the formation of the inner centromere. Its function is as follows. Component of heterochromatin that recognizes and binds histone H3 tails methylated at 'Lys-9' (H3K9me), leading to epigenetic repression. In contrast, it is excluded from chromatin when 'Tyr-41' of histone H3 is phosphorylated (H3Y41ph). Can interact with lamin-B receptor (LBR). This interaction can contribute to the association of the heterochromatin with the inner nuclear membrane. Involved in the formation of functional kinetochore through interaction with MIS12 complex proteins. This Mus musculus (Mouse) protein is Chromobox protein homolog 5 (Cbx5).